The primary structure comprises 429 residues: Uracil permease (429 aa).

Topologically, residues 1–13 (MTRRAIGVSERPP) are cytoplasmic. A helical membrane pass occupies residues 14 to 37 (LLQTIPLSLQHLFAMFGATVLVPV). The Periplasmic segment spans residues 38–41 (LFHI). Residues 42-61 (NPATVLLFNGIGTLLYLFIC) form a helical membrane-spanning segment. The Cytoplasmic segment spans residues 62–64 (KGK). Residues 65–81 (IPAYLGSSFAFISPVLL) traverse the membrane as a discontinuously helical segment. Phe73 lines the uracil pocket. The Periplasmic segment spans residues 82 to 89 (LLPLGYEV). Residues 90 to 110 (ALGGFIMCGVLFCLVSFIVKK) form a helical membrane-spanning segment. The Cytoplasmic segment spans residues 111 to 122 (AGTGWLDVLFPP). A helical transmembrane segment spans residues 123–144 (AAMGAIVAVIGLELAGVAAGMA). Over 145 to 155 (GLLPAEGQTPD) the chain is Periplasmic. Residues 156-171 (SKTIIISITTLAVTVL) traverse the membrane as a helical segment. The Cytoplasmic portion of the chain corresponds to 172 to 178 (GSVLFRG). Residues 179-199 (FLAIIPILIGVLVGYALSFAM) form a helical membrane-spanning segment. At 200–224 (GIVDTTPIINAHWFALPTLYTPRFE) the chain is on the periplasmic side. Residues 225 to 248 (WFAILTILPAALVVIAEHVGHLVV) form a helical membrane-spanning segment. Glu241 contacts uracil. The Cytoplasmic portion of the chain corresponds to 249-261 (TANIVKKDLLRDP). The helical transmembrane segment at 262 to 281 (GLHRSMFANGLSTVISGFFG) threads the bilayer. Residues 282 to 298 (STPNTTYGENIGVMAIT) form a discontinuously helical membrane-spanning segment. Uracil contacts are provided by Gly289 and Glu290. Topologically, residues 299–301 (RVY) are cytoplasmic. Residues 302–319 (STWVIGGAAIFAILLSCV) traverse the membrane as a helical segment. The Periplasmic segment spans residues 320 to 332 (GKLAAAIQMIPLP). The helical transmembrane segment at 333–354 (VMGGVSLLLYGVIGASGIRVLI) threads the bilayer. At 355-365 (ESKVDYNKAQN) the chain is on the cytoplasmic side. Positions 366–401 (LILTSVILIIGVSGAKVNIGAAELKGMALATIVGIG) form an intramembrane region, discontinuously helical. At 402–429 (LSLIFKLISVLRPEEVVLDAEDADITDK) the chain is on the cytoplasmic side.

This sequence belongs to the nucleobase:cation symporter-2 (NCS2) (TC 2.A.40) family.

The protein resides in the cell inner membrane. The catalysed reaction is uracil(in) + H(+)(in) = uracil(out) + H(+)(out). Its function is as follows. Transport of uracil in the cell. This Escherichia coli O157:H7 protein is Uracil permease (uraA).